Here is a 123-residue protein sequence, read N- to C-terminus: Small ribosomal subunit protein uS12cz/uS12cy (123 aa).

Belongs to the universal ribosomal protein uS12 family. Part of the 30S ribosomal subunit.

It is found in the plastid. It localises to the chloroplast. With S4 and S5 plays an important role in translational accuracy. Located at the interface of the 30S and 50S subunits. The chain is Small ribosomal subunit protein uS12cz/uS12cy (rps12-A) from Eucalyptus globulus subsp. globulus (Tasmanian blue gum).